A 310-amino-acid polypeptide reads, in one-letter code: ADP-L-glycero-D-manno-heptose-6-epimerase (310 aa).

Residues F10–I11, D31–N32, K38, K53, E75–S79, and N92 each bind NADP(+). Catalysis depends on Y140, which acts as the Proton acceptor. Residue K144 participates in NADP(+) binding. Residue N169 coordinates substrate. NADP(+) contacts are provided by V170 and K178. K178 serves as the catalytic Proton acceptor. Residues S180, H187, F201 to S204, R209, and Y272 contribute to the substrate site.

The protein belongs to the NAD(P)-dependent epimerase/dehydratase family. HldD subfamily. In terms of assembly, homopentamer. It depends on NADP(+) as a cofactor.

The catalysed reaction is ADP-D-glycero-beta-D-manno-heptose = ADP-L-glycero-beta-D-manno-heptose. It participates in nucleotide-sugar biosynthesis; ADP-L-glycero-beta-D-manno-heptose biosynthesis; ADP-L-glycero-beta-D-manno-heptose from D-glycero-beta-D-manno-heptose 7-phosphate: step 4/4. Catalyzes the interconversion between ADP-D-glycero-beta-D-manno-heptose and ADP-L-glycero-beta-D-manno-heptose via an epimerization at carbon 6 of the heptose. This Yersinia pseudotuberculosis serotype O:1b (strain IP 31758) protein is ADP-L-glycero-D-manno-heptose-6-epimerase.